A 362-amino-acid chain; its full sequence is Cobalt-precorrin-5B C(1)-methyltransferase (362 aa).

It belongs to the CbiD family.

It catalyses the reaction Co-precorrin-5B + S-adenosyl-L-methionine = Co-precorrin-6A + S-adenosyl-L-homocysteine. It functions in the pathway cofactor biosynthesis; adenosylcobalamin biosynthesis; cob(II)yrinate a,c-diamide from sirohydrochlorin (anaerobic route): step 6/10. Functionally, catalyzes the methylation of C-1 in cobalt-precorrin-5B to form cobalt-precorrin-6A. This Synechococcus sp. (strain CC9902) protein is Cobalt-precorrin-5B C(1)-methyltransferase.